The chain runs to 1419 residues: DNA-directed RNA polymerase subunit beta' (1419 aa).

4 residues coordinate Zn(2+): Cys-71, Cys-73, Cys-86, and Cys-89. The Mg(2+) site is built by Asp-461, Asp-463, and Asp-465. Residues Cys-815, Cys-889, Cys-896, and Cys-899 each contribute to the Zn(2+) site.

This sequence belongs to the RNA polymerase beta' chain family. In terms of assembly, the RNAP catalytic core consists of 2 alpha, 1 beta, 1 beta' and 1 omega subunit. When a sigma factor is associated with the core the holoenzyme is formed, which can initiate transcription. Mg(2+) serves as cofactor. The cofactor is Zn(2+).

The enzyme catalyses RNA(n) + a ribonucleoside 5'-triphosphate = RNA(n+1) + diphosphate. In terms of biological role, DNA-dependent RNA polymerase catalyzes the transcription of DNA into RNA using the four ribonucleoside triphosphates as substrates. This Actinobacillus succinogenes (strain ATCC 55618 / DSM 22257 / CCUG 43843 / 130Z) protein is DNA-directed RNA polymerase subunit beta'.